The sequence spans 124 residues: MHKLLKLLSITLIGLSVATGVQANVRAEMNQMKTVAATLTNAKDVAEFQESAKILREIAQQSSEKRPSSITNDADFKGYQEGMKEFITALDEADKLAQEGNLDAAKTAAKKLFDIRNVYHKKYK.

The first 23 residues, 1–23 (MHKLLKLLSITLIGLSVATGVQA), serve as a signal peptide directing secretion.

The protein belongs to the cytochrome b562 family.

This is an uncharacterized protein from Pasteurella multocida (strain Pm70).